We begin with the raw amino-acid sequence, 304 residues long: Cbb3-type cytochrome c oxidase subunit CcoP (304 aa).

2 consecutive transmembrane segments (helical) span residues 11–31 and 61–81; these read LYVAGITVVSLIFCLVVLIVA and WWAGLFLVTIAFAVIYLALYP. Cytochrome c domains are found at residues 129 to 209 and 216 to 296; these read QAMA…LSLS and VAAQ…WSLS. The heme c site is built by cysteine 142, cysteine 145, histidine 146, methionine 185, cysteine 228, cysteine 231, histidine 232, and methionine 273.

Belongs to the CcoP / FixP family. As to quaternary structure, component of the cbb3-type cytochrome c oxidase at least composed of CcoN, CcoO, CcoQ and CcoP. The cofactor is heme c.

The protein localises to the cell inner membrane. Its pathway is energy metabolism; oxidative phosphorylation. Functionally, C-type cytochrome. Part of the cbb3-type cytochrome c oxidase complex. CcoP subunit is required for transferring electrons from donor cytochrome c via its heme groups to CcoO subunit. From there, electrons are shuttled to the catalytic binuclear center of CcoN subunit where oxygen reduction takes place. The complex also functions as a proton pump. In Rubrivivax gelatinosus (Rhodocyclus gelatinosus), this protein is Cbb3-type cytochrome c oxidase subunit CcoP.